Reading from the N-terminus, the 714-residue chain is Fatty acid oxidation complex subunit alpha (714 aa).

Positions 1–190 (MEMASAFTLN…KLGLVDDVVP (190 aa)) are enoyl-CoA hydratase. The segment at 306 to 714 (APLNSVGILG…FWKTTATDLQ (409 aa)) is 3-hydroxyacyl-CoA dehydrogenase.

It in the N-terminal section; belongs to the enoyl-CoA hydratase/isomerase family. This sequence in the central section; belongs to the 3-hydroxyacyl-CoA dehydrogenase family. As to quaternary structure, heterotetramer of two alpha chains (FadJ) and two beta chains (FadI).

The protein localises to the cytoplasm. It catalyses the reaction a (3S)-3-hydroxyacyl-CoA = a (2E)-enoyl-CoA + H2O. The catalysed reaction is a 4-saturated-(3S)-3-hydroxyacyl-CoA = a (3E)-enoyl-CoA + H2O. It carries out the reaction a (3S)-3-hydroxyacyl-CoA + NAD(+) = a 3-oxoacyl-CoA + NADH + H(+). The enzyme catalyses (3S)-3-hydroxybutanoyl-CoA = (3R)-3-hydroxybutanoyl-CoA. It functions in the pathway lipid metabolism; fatty acid beta-oxidation. Catalyzes the formation of a hydroxyacyl-CoA by addition of water on enoyl-CoA. Also exhibits 3-hydroxyacyl-CoA epimerase and 3-hydroxyacyl-CoA dehydrogenase activities. This is Fatty acid oxidation complex subunit alpha from Escherichia coli O17:K52:H18 (strain UMN026 / ExPEC).